A 280-amino-acid polypeptide reads, in one-letter code: Putative protein-tyrosine sulfotransferase (280 aa).

16 to 20 lines the 3'-phosphoadenylyl sulfate pocket; that stretch reads RSGTT. The cysteines at positions 34 and 89 are disulfide-linked. Glutamate 37 functions as the Proton donor/acceptor in the catalytic mechanism. The N-linked (GlcNAc...) asparagine glycan is linked to asparagine 57. Residues arginine 116, serine 124, and arginine 128 each contribute to the 3'-phosphoadenylyl sulfate site. Asparagine 136 carries N-linked (GlcNAc...) asparagine glycosylation. An intrachain disulfide couples cysteine 158 to cysteine 165. Residues tyrosine 170 and 215–224 each bind 3'-phosphoadenylyl sulfate; that span reads SASQVKNSIN.

It belongs to the protein sulfotransferase family.

The enzyme catalyses L-tyrosyl-[protein] + 3'-phosphoadenylyl sulfate = O-sulfo-L-tyrosine-[protein] + adenosine 3',5'-bisphosphate + H(+). Its function is as follows. Catalyzes the O-sulfation of tyrosine residues within acidic motifs of polypeptides, using 3'-phosphoadenylyl sulfate (PAPS) as cosubstrate. The protein is Putative protein-tyrosine sulfotransferase of Caenorhabditis briggsae.